Here is a 387-residue protein sequence, read N- to C-terminus: Paralemmin-1 (387 aa).

M1 carries the post-translational modification N-acetylmethionine. Residues 9-101 (TSQQERLQAI…EKEIEVLERG (93 aa)) are a coiled coil. 2 stretches are compositionally biased toward basic and acidic residues: residues 31 to 41 (KRRQLEDERRQ) and 69 to 102 (DLRR…ERGD). Positions 31 to 160 (KRRQLEDERR…VSNTPLRTVD (130 aa)) are disordered. Low complexity predominate over residues 104-117 (APATAKENAAAPSP). Phosphoserine occurs at positions 116 and 124. Residues T141 and T145 each carry the phosphothreonine modification. S162 is modified (phosphoserine). T243 carries the post-translational modification Phosphothreonine. The residue at position 245 (S245) is a Phosphoserine. 2 disordered regions span residues 247–296 (AGST…GQEP) and 335–378 (AEPK…DMKK). Over residues 286-296 (GPPGIQPGQEP) the composition is skewed to low complexity. S346 is subject to Phosphoserine. Position 367 is a phosphothreonine (T367). Phosphoserine is present on S369. 2 S-palmitoyl cysteine lipidation sites follow: C381 and C383. At C384 the chain carries Cysteine methyl ester. C384 carries the S-farnesyl cysteine lipid modification. Positions 385–387 (SIM) are cleaved as a propeptide — removed in mature form.

This sequence belongs to the paralemmin family. In terms of assembly, interacts with dopamine receptor DRD3. Widely expressed with highest expression in brain and testis and intermediate expression in heart and adrenal gland.

Its subcellular location is the cell membrane. The protein resides in the cell projection. The protein localises to the filopodium membrane. It is found in the axon. It localises to the dendrite. Its subcellular location is the dendritic spine. The protein resides in the basolateral cell membrane. The protein localises to the apicolateral cell membrane. Involved in plasma membrane dynamics and cell process formation. Isoform 1 and isoform 2 are necessary for axonal and dendritic filopodia induction, for dendritic spine maturation and synapse formation in a palmitoylation-dependent manner. This chain is Paralemmin-1 (PALM), found in Homo sapiens (Human).